Consider the following 198-residue polypeptide: Endoribonuclease YbeY (198 aa).

Zn(2+)-binding residues include histidine 156, histidine 160, and histidine 166.

The protein belongs to the endoribonuclease YbeY family. It depends on Zn(2+) as a cofactor.

It is found in the cytoplasm. Its function is as follows. Single strand-specific metallo-endoribonuclease involved in late-stage 70S ribosome quality control and in maturation of the 3' terminus of the 16S rRNA. The sequence is that of Endoribonuclease YbeY from Cupriavidus necator (strain ATCC 17699 / DSM 428 / KCTC 22496 / NCIMB 10442 / H16 / Stanier 337) (Ralstonia eutropha).